We begin with the raw amino-acid sequence, 433 residues long: MKLTQATTLLLSLGLSLPVEGFSLSRTNAVGPKPPFRPLPASTPRNKTCQVQSNGDGTDDAPYILAALKQCNNGGKVVFAEDKEYTIGTALDMTFLKHVDLEILGKITFTPDTDYWQENSFKHTFQNATTFFNLGGTDVNVYGGGELNGNGQVWYDLYAEDALILRPILVGIIGLHGGTIGPLKLRYSPQWYQLVANSSDVLFDGIDISGYSSSENEAKNTDGWDTYRSSNIVIQNSVINNGDDCVSFKPNSTEILVQNLHCNGSHGISVGSLGQYQGEVDIVQNVLVYNISMYNASDMARIKVWPGISSAMSEDLQGGGGLGSVQNITYDKMYIENVDWAIEVTQCYGQKNQTLCNENPSNLTISDVYFNDLTGVTSGKNDPNVGTIICSSPDVCSGIHATNIDVKSPDGDSGFVCTNVDEEFLDVECASSS.

The first 21 residues, 1 to 21 (MKLTQATTLLLSLGLSLPVEG), serve as a signal peptide directing secretion. Residues 30-54 (VGPKPPFRPLPASTPRNKTCQVQSN) form a disordered region. Over residues 43–54 (TPRNKTCQVQSN) the composition is skewed to polar residues. N-linked (GlcNAc...) asparagine glycans are attached at residues asparagine 46, asparagine 127, and asparagine 197. One copy of the PbH1 1 repeat lies at 229–250 (SSNIVIQNSVINNGDDCVSFKP). The active-site Proton donor is aspartate 243. A disulfide bridge links cysteine 245 with cysteine 262. Residues asparagine 251 and asparagine 263 are each glycosylated (N-linked (GlcNAc...) asparagine). The PbH1 2 repeat unit spans residues 252–272 (STEILVQNLHCNGSHGISVGS). Residue histidine 266 is part of the active site. Residues asparagine 290, asparagine 295, asparagine 327, asparagine 352, and asparagine 362 are each glycosylated (N-linked (GlcNAc...) asparagine). One copy of the PbH1 3 repeat lies at 325-346 (VQNITYDKMYIENVDWAIEVTQ). The PbH1 4 repeat unit spans residues 360–403 (PSNLTISDVYFNDLTGVTSGKNDPNVGTIICSSPDVCSGIHATN). The cysteines at positions 390 and 396 are disulfide-linked.

This sequence belongs to the glycosyl hydrolase 28 family.

Its subcellular location is the secreted. The enzyme catalyses [(1-&gt;4)-alpha-D-galacturonosyl](n) + H2O = alpha-D-galacturonate + [(1-&gt;4)-alpha-D-galacturonosyl](n-1). In terms of biological role, specific in hydrolyzing the terminal glycosidic bond of polygalacturonic acid and oligogalacturonates. The sequence is that of Probable exopolygalacturonase X (pgaX) from Aspergillus flavus (strain ATCC 200026 / FGSC A1120 / IAM 13836 / NRRL 3357 / JCM 12722 / SRRC 167).